A 240-amino-acid chain; its full sequence is MYEAVHAHPDGDATVARHAATAERYGYEGIVVRTREALDPASKSSEHADEATALRDEYGIDVVDAVEIDADNATSASGAVGNYRSDRTVVCVVGGDDGLNRFAVEEPRVDVLVRPMGGGDFNHVLAKAARDNGVHVEFDLGPLFRATGGKRVRALADLRKLREIVTYYDTPHVVSANPRSHLDLRAPREVVAAAEAVGFDAEWVREGLRAWGEIATRNRERRSEAFIEPGVRRGRYEEDG.

It belongs to the eukaryotic/archaeal RNase P protein component 3 family. As to quaternary structure, consists of a catalytic RNA component and at least 4-5 protein subunits.

The protein localises to the cytoplasm. The catalysed reaction is Endonucleolytic cleavage of RNA, removing 5'-extranucleotides from tRNA precursor.. Part of ribonuclease P, a protein complex that generates mature tRNA molecules by cleaving their 5'-ends. The protein is Ribonuclease P protein component 3 of Halorubrum lacusprofundi (strain ATCC 49239 / DSM 5036 / JCM 8891 / ACAM 34).